The following is a 235-amino-acid chain: Orotidine 5'-phosphate decarboxylase (235 aa).

Residues Asp-12, Lys-34, 61-70 (DMKLLDIDNT), Thr-116, Arg-177, Gln-186, Gly-206, and Arg-207 each bind substrate. The active-site Proton donor is Lys-63.

It belongs to the OMP decarboxylase family. Type 1 subfamily. As to quaternary structure, homodimer.

The catalysed reaction is orotidine 5'-phosphate + H(+) = UMP + CO2. Its pathway is pyrimidine metabolism; UMP biosynthesis via de novo pathway; UMP from orotate: step 2/2. Catalyzes the decarboxylation of orotidine 5'-monophosphate (OMP) to uridine 5'-monophosphate (UMP). This is Orotidine 5'-phosphate decarboxylase from Rhizobium etli (strain ATCC 51251 / DSM 11541 / JCM 21823 / NBRC 15573 / CFN 42).